A 728-amino-acid polypeptide reads, in one-letter code: Procollagen-lysine,2-oxoglutarate 5-dioxygenase 1 (728 aa).

The N-terminal stretch at 1–18 is a signal peptide; that stretch reads MRSLLLLAPLAWLLLVQA. N-linked (GlcNAc...) asparagine glycosylation is found at Asn198 and Asn539. One can recognise a Fe2OG dioxygenase domain in the interval 637 to 728; the sequence is QFDLAFVVRY…RYIAVSFVDP (92 aa). Fe cation is bound by residues His657 and Asp659. A glycan (N-linked (GlcNAc...) asparagine) is linked at Asn687. A Fe cation-binding site is contributed by His709. Arg719 is a catalytic residue.

In terms of assembly, homodimer. Identified in a complex with P3H3 and P3H4. Requires Fe(2+) as cofactor. It depends on L-ascorbate as a cofactor. Highly expressed in the liver, heart, lung, skeletal muscle and kidney.

The protein localises to the rough endoplasmic reticulum membrane. The enzyme catalyses L-lysyl-[collagen] + 2-oxoglutarate + O2 = (5R)-5-hydroxy-L-lysyl-[collagen] + succinate + CO2. Its function is as follows. Part of a complex composed of PLOD1, P3H3 and P3H4 that catalyzes hydroxylation of lysine residues in collagen alpha chains and is required for normal assembly and cross-linkling of collagen fibrils. Forms hydroxylysine residues in -Xaa-Lys-Gly- sequences in collagens. These hydroxylysines serve as sites of attachment for carbohydrate units and are essential for the stability of the intermolecular collagen cross-links. This Mus musculus (Mouse) protein is Procollagen-lysine,2-oxoglutarate 5-dioxygenase 1 (Plod1).